The following is a 197-amino-acid chain: Large ribosomal subunit protein uL11 (197 aa).

The protein belongs to the universal ribosomal protein uL11 family. As to quaternary structure, part of the ribosomal stalk of the 50S ribosomal subunit. Interacts with L10 and the large rRNA to form the base of the stalk. L10 forms an elongated spine to which L12 dimers bind in a sequential fashion forming a multimeric L10(L12)X complex. In terms of processing, one or more lysine residues are methylated.

Forms part of the ribosomal stalk which helps the ribosome interact with GTP-bound translation factors. The sequence is that of Large ribosomal subunit protein uL11 from Mycoplasma mobile (strain ATCC 43663 / 163K / NCTC 11711) (Mesomycoplasma mobile).